Here is a 447-residue protein sequence, read N- to C-terminus: Signal recognition particle 54 kDa protein (447 aa).

GTP-binding positions include 103–110 (GVQGSGKT), 185–189 (DTAGR), and 245–248 (TKMD).

The protein belongs to the GTP-binding SRP family. SRP54 subfamily. In terms of assembly, part of the signal recognition particle protein translocation system, which is composed of SRP and FtsY. Archaeal SRP consists of a 7S RNA molecule of 300 nucleotides and two protein subunits: SRP54 and SRP19.

It is found in the cytoplasm. It catalyses the reaction GTP + H2O = GDP + phosphate + H(+). Its function is as follows. Involved in targeting and insertion of nascent membrane proteins into the cytoplasmic membrane. Binds to the hydrophobic signal sequence of the ribosome-nascent chain (RNC) as it emerges from the ribosomes. The SRP-RNC complex is then targeted to the cytoplasmic membrane where it interacts with the SRP receptor FtsY. The protein is Signal recognition particle 54 kDa protein of Saccharolobus islandicus (strain Y.G.57.14 / Yellowstone #1) (Sulfolobus islandicus).